A 286-amino-acid chain; its full sequence is Phosphonates import ATP-binding protein PhnC (286 aa).

Residues 3–246 (FHLKQVTRRF…AVTEIYGTDS (244 aa)) form the ABC transporter domain. Position 35-42 (35-42 (GRSGAGKS)) interacts with ATP.

It belongs to the ABC transporter superfamily. Phosphonates importer (TC 3.A.1.9.1) family. The complex is composed of two ATP-binding proteins (PhnC), two transmembrane proteins (PhnE) and a solute-binding protein (PhnD).

It is found in the cell inner membrane. It catalyses the reaction phosphonate(out) + ATP + H2O = phosphonate(in) + ADP + phosphate + H(+). Functionally, part of the ABC transporter complex PhnCDE involved in phosphonates import. Responsible for energy coupling to the transport system. This chain is Phosphonates import ATP-binding protein PhnC, found in Agrobacterium fabrum (strain C58 / ATCC 33970) (Agrobacterium tumefaciens (strain C58)).